The chain runs to 262 residues: Tropinone reductase homolog At2g29310 (262 aa).

13–37 (LVTGAASGIGYAIVEELASFGAIIH) is a binding site for NADP(+). Position 146 (S146) interacts with substrate. The active-site Proton acceptor is the Y159.

The protein belongs to the short-chain dehydrogenases/reductases (SDR) family. SDR65C subfamily.

The chain is Tropinone reductase homolog At2g29310 from Arabidopsis thaliana (Mouse-ear cress).